The following is a 337-amino-acid chain: U11/U12 small nuclear ribonucleoprotein 48 kDa protein (337 aa).

The segment at 55 to 82 (IAICPYDSNHRMPKSSLTKHMESCRLRK) adopts a CHHC U11-48K-type zinc-finger fold. Cys-58, His-64, His-74, and Cys-78 together coordinate Zn(2+). Residues Lys-87 and Lys-104 each participate in a glycyl lysine isopeptide (Lys-Gly) (interchain with G-Cter in SUMO2) cross-link. Positions 255-276 (HWQEEQGRAGDAAEKNEERRSA) are enriched in basic and acidic residues. The segment at 255-337 (HWQEEQGRAG…HSHKRRKQKI (83 aa)) is disordered. Positions 294–310 (RHRRARSRSPHKRKRNK) are enriched in basic residues. Residues 311 to 326 (DKSSESRRRKERDGER) show a composition bias toward basic and acidic residues. The span at 327-337 (HHSHKRRKQKI) shows a compositional bias: basic residues.

In terms of assembly, component of the U11/U12 snRNPs that are part of the U12-type spliceosome. Not found in the major spliceosome.

The protein localises to the nucleus. Functionally, likely involved in U12-type 5' splice site recognition. The protein is U11/U12 small nuclear ribonucleoprotein 48 kDa protein (Snrnp48) of Mus musculus (Mouse).